The following is a 219-amino-acid chain: Large ribosomal subunit protein uL16y (219 aa).

The protein belongs to the universal ribosomal protein uL16 family. Component of the small ribosomal subunit. Mature ribosomes consist of a small (40S) and a large (60S) subunit. The 40S subunit contains about 33 different proteins and 1 molecule of RNA (18S). The 60S subunit contains about 49 different proteins and 3 molecules of RNA (25S, 5.8S and 5S).

This chain is Large ribosomal subunit protein uL16y (SG12), found in Oryza sativa subsp. japonica (Rice).